Reading from the N-terminus, the 148-residue chain is D-aminoacyl-tRNA deacylase (148 aa).

Positions 137–138 match the Gly-cisPro motif, important for rejection of L-amino acids motif; it reads GP.

It belongs to the DTD family. Homodimer.

It localises to the cytoplasm. It catalyses the reaction glycyl-tRNA(Ala) + H2O = tRNA(Ala) + glycine + H(+). The catalysed reaction is a D-aminoacyl-tRNA + H2O = a tRNA + a D-alpha-amino acid + H(+). In terms of biological role, an aminoacyl-tRNA editing enzyme that deacylates mischarged D-aminoacyl-tRNAs. Also deacylates mischarged glycyl-tRNA(Ala), protecting cells against glycine mischarging by AlaRS. Acts via tRNA-based rather than protein-based catalysis; rejects L-amino acids rather than detecting D-amino acids in the active site. By recycling D-aminoacyl-tRNA to D-amino acids and free tRNA molecules, this enzyme counteracts the toxicity associated with the formation of D-aminoacyl-tRNA entities in vivo and helps enforce protein L-homochirality. The polypeptide is D-aminoacyl-tRNA deacylase (Finegoldia magna (strain ATCC 29328 / DSM 20472 / WAL 2508) (Peptostreptococcus magnus)).